The chain runs to 209 residues: Histidine biosynthesis bifunctional protein HisIE (209 aa).

The segment at 1–123 is phosphoribosyl-AMP cyclohydrolase; sequence MEIEKLLEQV…VLPIDYSLSI (123 aa). The phosphoribosyl-ATP pyrophosphohydrolase stretch occupies residues 124 to 209; it reads LKELEEIIKR…VMNELRRRRK (86 aa).

It in the N-terminal section; belongs to the PRA-CH family. The protein in the C-terminal section; belongs to the PRA-PH family.

The protein resides in the cytoplasm. It catalyses the reaction 1-(5-phospho-beta-D-ribosyl)-ATP + H2O = 1-(5-phospho-beta-D-ribosyl)-5'-AMP + diphosphate + H(+). It carries out the reaction 1-(5-phospho-beta-D-ribosyl)-5'-AMP + H2O = 1-(5-phospho-beta-D-ribosyl)-5-[(5-phospho-beta-D-ribosylamino)methylideneamino]imidazole-4-carboxamide. The protein operates within amino-acid biosynthesis; L-histidine biosynthesis; L-histidine from 5-phospho-alpha-D-ribose 1-diphosphate: step 2/9. It participates in amino-acid biosynthesis; L-histidine biosynthesis; L-histidine from 5-phospho-alpha-D-ribose 1-diphosphate: step 3/9. The chain is Histidine biosynthesis bifunctional protein HisIE (hisI) from Pyrococcus furiosus (strain ATCC 43587 / DSM 3638 / JCM 8422 / Vc1).